The chain runs to 948 residues: Coatomer subunit beta-2 (948 aa).

6 HEAT repeats span residues 49-87 (ETIPQLFITIIRYVLPSEDHTIQKLLLLYLELIEKTDSK), 92-126 (PEMILICQNLRNNLQHPNEYIRGVTLRFLCRMKET), 127-164 (EIVEPLTPSVLQNLEHRHPFVRRNAILAIMSIYKLPHG), 274-311 (TAIRAAANTYCQLLLSQSDNNVKLILLDRLYELKTLHR), 312-349 (DIMVELIIDVLRALSSPNLDIRRKTLDIALDLITHHNI), and 391-428 (EVASTVVHLLMDFLGDSNVASALDVVVFVREIIETNPK).

As to quaternary structure, oligomeric complex that consists of at least the alpha, beta, beta', gamma, delta, epsilon and zeta subunits.

The protein resides in the cytoplasm. The protein localises to the golgi apparatus membrane. Its subcellular location is the cytoplasmic vesicle. It localises to the COPI-coated vesicle membrane. In terms of biological role, the coatomer is a cytosolic protein complex that binds to dilysine motifs and reversibly associates with Golgi non-clathrin-coated vesicles, which further mediate biosynthetic protein transport from the ER, via the Golgi up to the trans Golgi network. Coatomer complex is required for budding from Golgi membranes, and is essential for the retrograde Golgi-to-ER transport of dilysine-tagged proteins. The protein is Coatomer subunit beta-2 of Arabidopsis thaliana (Mouse-ear cress).